Reading from the N-terminus, the 172-residue chain is Centrin-1 (172 aa).

Positions 1–30 (MASSYRKPTVASTSQKRKVGPKPELTEEQK) are disordered. EF-hand domains lie at 28 to 63 (EQKQ…LGFE), 64 to 99 (PRKE…KMAE), 101 to 136 (DTKE…LGEN), and 137 to 172 (LTDE…TNLY). D41, D43, S45, T47, and E52 together coordinate Ca(2+). Residues D150, D152, D154, E156, and E161 each contribute to the Ca(2+) site.

It belongs to the centrin family. Monomer. Interacts with CIMAP3. Interacts with USP49.

Its subcellular location is the cytoplasm. It is found in the cytoskeleton. It localises to the microtubule organizing center. The protein localises to the centrosome. In terms of biological role, plays a fundamental role in microtubule-organizing center structure and function. Plays a role in sperm cilia formation. In Bos taurus (Bovine), this protein is Centrin-1 (CETN1).